The following is a 343-amino-acid chain: ATP-dependent 6-phosphofructokinase (343 aa).

ATP is bound by residues glycine 10, 73 to 74 (RV), and 103 to 106 (GEGT). Glutamate 104 contacts Mg(2+). Substrate contacts are provided by residues 126-128 (TID), arginine 163, 170-172 (MGR), glutamate 223, arginine 267, and 273-276 (HIQR). Residue aspartate 128 is the Proton acceptor of the active site.

It belongs to the phosphofructokinase type A (PFKA) family. Mixed-substrate PFK group III subfamily. As to quaternary structure, homodimer or homotetramer. Mg(2+) serves as cofactor.

The protein resides in the cytoplasm. The catalysed reaction is beta-D-fructose 6-phosphate + ATP = beta-D-fructose 1,6-bisphosphate + ADP + H(+). It catalyses the reaction D-tagatofuranose 6-phosphate + ATP = D-tagatofuranose 1,6-bisphosphate + ADP + H(+). The protein operates within carbohydrate degradation; glycolysis; D-glyceraldehyde 3-phosphate and glycerone phosphate from D-glucose: step 3/4. Its function is as follows. Catalyzes the phosphorylation of D-fructose 6-phosphate to fructose 1,6-bisphosphate by ATP, the first committing step of glycolysis. Can also catalyze the phosphorylation of tagatose-6-phosphate. This Mycobacterium tuberculosis (strain CDC 1551 / Oshkosh) protein is ATP-dependent 6-phosphofructokinase.